Reading from the N-terminus, the 123-residue chain is Protein Wnt-3b (123 aa).

The O-palmitoleoyl serine; by PORCN moiety is linked to residue serine 1. Cysteine 89 and cysteine 104 are oxidised to a cystine. Residue asparagine 90 is glycosylated (N-linked (GlcNAc...) asparagine).

The protein belongs to the Wnt family. In terms of processing, palmitoleoylation is required for efficient binding to frizzled receptors. Depalmitoleoylation leads to Wnt signaling pathway inhibition.

The protein localises to the secreted. It is found in the extracellular space. It localises to the extracellular matrix. Its function is as follows. Ligand for members of the frizzled family of seven transmembrane receptors. Probable developmental protein. May be a signaling molecule which affects the development of discrete regions of tissues. Is likely to signal over only few cell diameters. This chain is Protein Wnt-3b (WNT3B), found in Meleagris gallopavo (Wild turkey).